Reading from the N-terminus, the 173-residue chain is Protein tyrosine phosphatase type IVA 1 (173 aa).

The Tyrosine-protein phosphatase domain maps to 8–161; sequence APVEVTYKNM…YRPKMRLRFK (154 aa). A disulfide bond links cysteine 49 and cysteine 104. The active-site Proton donor is aspartate 72. The segment at 97–132 is interaction with ATF5; the sequence is GCCIAVHCVAGLGRAPVLVALALIEGGMKYEDAVQF. Cysteine 104 (phosphocysteine intermediate) is an active-site residue. 105–110 contributes to the phosphate binding site; that stretch reads VAGLGR. Arginine 110 contacts substrate. The residue at position 170 (cysteine 170) is a Cysteine methyl ester. Cysteine 170 carries S-farnesyl cysteine lipidation. The propeptide at 171-173 is removed in mature form; it reads CIQ.

Belongs to the protein-tyrosine phosphatase family. Homotrimer. Interacts with ATF5. Interacts with tubulin. Post-translationally, farnesylated. Farnesylation is required for membrane targeting. Unfarnesylated forms are shifted into the nucleus. As to expression, expressed in bone marrow, lymph nodes, T lymphocytes, spleen, thymus and tonsil. Overexpressed in tumor cell lines.

The protein resides in the cell membrane. It is found in the early endosome. It localises to the endoplasmic reticulum. Its subcellular location is the cytoplasm. The protein localises to the cytoskeleton. The protein resides in the spindle. It is found in the nucleus. The catalysed reaction is O-phospho-L-tyrosyl-[protein] + H2O = L-tyrosyl-[protein] + phosphate. Inhibited by sodium orthovanadate and pentamidine. In terms of biological role, protein tyrosine phosphatase which stimulates progression from G1 into S phase during mitosis. May play a role in the development and maintenance of differentiating epithelial tissues. Enhances cell proliferation, cell motility and invasive activity, and promotes cancer metastasis. The sequence is that of Protein tyrosine phosphatase type IVA 1 (PTP4A1) from Homo sapiens (Human).